The sequence spans 121 residues: Large ribosomal subunit protein uL14 (121 aa).

This sequence belongs to the universal ribosomal protein uL14 family. Part of the 50S ribosomal subunit. Forms a cluster with proteins L3 and L19. In the 70S ribosome, L14 and L19 interact and together make contacts with the 16S rRNA in bridges B5 and B8.

In terms of biological role, binds to 23S rRNA. Forms part of two intersubunit bridges in the 70S ribosome. This Synechococcus sp. (strain CC9311) protein is Large ribosomal subunit protein uL14.